Consider the following 288-residue polypeptide: Mortality factor 4-like protein 2 (288 aa).

Residues 1 to 15 are compositionally biased toward polar residues; that stretch reads MSSRKQGSQPRGQQS. The interval 1-113 is disordered; sequence MSSRKQGSQP…RADPTVESEE (113 aa). Ser71 is subject to Phosphoserine. In terms of domain architecture, MRG spans 117–288; the sequence is NRMEVKVKIP…ASAEYHRKAL (172 aa).

In terms of assembly, component of the NuA4 histone acetyltransferase complex which contains the catalytic subunit KAT5/TIP60 and the subunits EP400, TRRAP/PAF400, BRD8/SMAP, EPC1, DMAP1/DNMAP1, RUVBL1/TIP49, RUVBL2, ING3, actin, ACTL6A/BAF53A, MORF4L1/MRG15, MORF4L2/MRGX, MRGBP, YEATS4/GAS41 and VPS72/YL1. The NuA4 complex interacts with MYC and the adenovirus E1A protein. MORF4L1 may also participate in the formation of NuA4 related complexes which lack the KAT5/TIP60 catalytic subunit, but which include the SWI/SNF related protein SRCAP. Component of the MSIN3A histone deacetylase complex, which includes SIN3A, HDAC2, ARID4B, MORF4L1, RBBP4/RbAp48, and RBBP7/RbAp46. Interacts with MRFAP1 and RB1. May also interact with one or more as yet undefined members of the TLE (transducin-like enhancer of split) family of transcriptional repressors.

The protein localises to the nucleus. In terms of biological role, component of the NuA4 histone acetyltransferase complex which is involved in transcriptional activation of select genes principally by acetylation of nucleosomal histone H4 and H2A. This modification may both alter nucleosome - DNA interactions and promote interaction of the modified histones with other proteins which positively regulate transcription. This complex may be required for the activation of transcriptional programs associated with oncogene and proto-oncogene mediated growth induction, tumor suppressor mediated growth arrest and replicative senescence, apoptosis, and DNA repair. The NuA4 complex ATPase and helicase activities seem to be, at least in part, contributed by the association of RUVBL1 and RUVBL2 with EP400. NuA4 may also play a direct role in DNA repair when directly recruited to sites of DNA damage. Also a component of the MSIN3A complex which acts to repress transcription by deacetylation of nucleosomal histones. The polypeptide is Mortality factor 4-like protein 2 (MORF4L2) (Homo sapiens (Human)).